The sequence spans 452 residues: Probable splicing factor, arginine/serine-rich 7 (452 aa).

2 RRM domains span residues 10 to 91 (KILH…YPNP) and 163 to 240 (RTVY…HSRV). Positions 258 to 452 (EEAIRMGRNG…GNGDVVMASE (195 aa)) are disordered. The span at 259–272 (EAIRMGRNGDDRDR) shows a compositional bias: basic and acidic residues. Over residues 273 to 290 (RRSRSPRRRRSPSPRRRR) the composition is skewed to basic residues. Basic and acidic residues predominate over residues 291-305 (DSRDRDRDRDRDRRR). Composition is skewed to basic residues over residues 323-335 (KRSR…RRSR), 345-360 (KRSR…KSRD), and 370-382 (SKDR…RSRS). Basic and acidic residues predominate over residues 383–421 (RSPEKRRDKEDRKTEKKENENESSLREKLLEKKAARKDS).

Belongs to the splicing factor SR family. Extensively phosphorylated on serine residues in the RS domain.

The protein localises to the nucleus. The polypeptide is Probable splicing factor, arginine/serine-rich 7 (rsp-7) (Caenorhabditis elegans).